Here is a 219-residue protein sequence, read N- to C-terminus: Protein-L-isoaspartate O-methyltransferase 2 (219 aa).

Residue S66 is part of the active site.

This sequence belongs to the methyltransferase superfamily. L-isoaspartyl/D-aspartyl protein methyltransferase family.

The protein localises to the cytoplasm. The enzyme catalyses [protein]-L-isoaspartate + S-adenosyl-L-methionine = [protein]-L-isoaspartate alpha-methyl ester + S-adenosyl-L-homocysteine. Its function is as follows. Catalyzes the methyl esterification of L-isoaspartyl residues in peptides and proteins that result from spontaneous decomposition of normal L-aspartyl and L-asparaginyl residues. It plays a role in the repair and/or degradation of damaged proteins. The sequence is that of Protein-L-isoaspartate O-methyltransferase 2 from Marinobacter nauticus (strain ATCC 700491 / DSM 11845 / VT8) (Marinobacter aquaeolei).